The chain runs to 243 residues: uncharacterized protein (243 aa).

This is an uncharacterized protein from Caenorhabditis elegans.